The primary structure comprises 312 residues: Ribonuclease HIII (312 aa).

Residues 95-311 (FNCIGSDEAG…REKAQKILKP (217 aa)) form the RNase H type-2 domain. Positions 101, 102, and 206 each coordinate a divalent metal cation.

This sequence belongs to the RNase HII family. RnhC subfamily. Mn(2+) serves as cofactor. It depends on Mg(2+) as a cofactor.

Its subcellular location is the cytoplasm. The catalysed reaction is Endonucleolytic cleavage to 5'-phosphomonoester.. Its function is as follows. Endonuclease that specifically degrades the RNA of RNA-DNA hybrids. In Staphylococcus aureus (strain MW2), this protein is Ribonuclease HIII.